The primary structure comprises 271 residues: Acyl-[acyl-carrier-protein]--UDP-N-acetylglucosamine O-acyltransferase (271 aa).

This sequence belongs to the transferase hexapeptide repeat family. LpxA subfamily. Homotrimer.

It localises to the cytoplasm. The catalysed reaction is a (3R)-hydroxyacyl-[ACP] + UDP-N-acetyl-alpha-D-glucosamine = a UDP-3-O-[(3R)-3-hydroxyacyl]-N-acetyl-alpha-D-glucosamine + holo-[ACP]. Its pathway is glycolipid biosynthesis; lipid IV(A) biosynthesis; lipid IV(A) from (3R)-3-hydroxytetradecanoyl-[acyl-carrier-protein] and UDP-N-acetyl-alpha-D-glucosamine: step 1/6. In terms of biological role, involved in the biosynthesis of lipid A, a phosphorylated glycolipid that anchors the lipopolysaccharide to the outer membrane of the cell. The protein is Acyl-[acyl-carrier-protein]--UDP-N-acetylglucosamine O-acyltransferase of Agrobacterium fabrum (strain C58 / ATCC 33970) (Agrobacterium tumefaciens (strain C58)).